A 282-amino-acid chain; its full sequence is 2-dehydro-3-deoxyphosphooctonate aldolase (282 aa).

This sequence belongs to the KdsA family.

The protein resides in the cytoplasm. It catalyses the reaction D-arabinose 5-phosphate + phosphoenolpyruvate + H2O = 3-deoxy-alpha-D-manno-2-octulosonate-8-phosphate + phosphate. Its pathway is carbohydrate biosynthesis; 3-deoxy-D-manno-octulosonate biosynthesis; 3-deoxy-D-manno-octulosonate from D-ribulose 5-phosphate: step 2/3. It functions in the pathway bacterial outer membrane biogenesis; lipopolysaccharide biosynthesis. This chain is 2-dehydro-3-deoxyphosphooctonate aldolase, found in Shewanella sp. (strain MR-4).